Consider the following 563-residue polypeptide: O-fucosyltransferase 14 (563 aa).

The span at 1 to 16 (MVKVSSSTTSSSSSSS) shows a compositional bias: low complexity. Positions 1 to 25 (MVKVSSSTTSSSSSSSPDEESDLQN) are disordered. Residues 73-93 (IFIFLPIVIILIYLSTDFSNY) form a helical; Signal-anchor for type II membrane protein membrane-spanning segment. N-linked (GlcNAc...) asparagine glycosylation is found at N135, N140, and N339. Substrate contacts are provided by residues 412–414 (HFR) and 528–529 (TF).

This sequence belongs to the glycosyltransferase GT106 family.

The protein localises to the membrane. It functions in the pathway glycan metabolism. The polypeptide is O-fucosyltransferase 14 (Arabidopsis thaliana (Mouse-ear cress)).